We begin with the raw amino-acid sequence, 522 residues long: Flavin-dependent halogenase armH1 (522 aa).

3 residues coordinate FAD: G16, A19, and E49. Chloride is bound by residues S328 and G329. I330 is an FAD binding site.

It belongs to the flavin-dependent halogenase family.

It carries out the reaction melleolide F + FADH2 + chloride + O2 = 6'-chloromelleolide F + FAD + 2 H2O + H(+). Functionally, flavin-dependent halogenase involved in the biosynthesis of melleolides, a range of antifungal and phytotoxic polyketide derivatives composed of an orsellinic acid (OA) moiety esterified to various sesquiterpene alcohols. The halogenase catalyzes the transfer of a single chlorine atom to the melleolide backbone, resulting in a 6'-chloromelleolide product. The enzyme acts on free substrate and does not depend on carrier-protein-dependent acceptor molecules. The polypeptide is Flavin-dependent halogenase armH1 (Armillaria mellea (Honey mushroom)).